The sequence spans 404 residues: Dual-specificity RNA methyltransferase RlmN (404 aa).

Glu-118 acts as the Proton acceptor in catalysis. Positions 125-357 (VGRAGALCVS…NKAGYSSPIR (233 aa)) constitute a Radical SAM core domain. A disulfide bond links Cys-132 and Cys-368. Positions 139, 143, and 146 each coordinate [4Fe-4S] cluster. Residues 194–195 (GE), Ser-226, 248–250 (SLH), and Asn-325 contribute to the S-adenosyl-L-methionine site. The active-site S-methylcysteine intermediate is the Cys-368.

Belongs to the radical SAM superfamily. RlmN family. It depends on [4Fe-4S] cluster as a cofactor.

Its subcellular location is the cytoplasm. The enzyme catalyses adenosine(2503) in 23S rRNA + 2 reduced [2Fe-2S]-[ferredoxin] + 2 S-adenosyl-L-methionine = 2-methyladenosine(2503) in 23S rRNA + 5'-deoxyadenosine + L-methionine + 2 oxidized [2Fe-2S]-[ferredoxin] + S-adenosyl-L-homocysteine. The catalysed reaction is adenosine(37) in tRNA + 2 reduced [2Fe-2S]-[ferredoxin] + 2 S-adenosyl-L-methionine = 2-methyladenosine(37) in tRNA + 5'-deoxyadenosine + L-methionine + 2 oxidized [2Fe-2S]-[ferredoxin] + S-adenosyl-L-homocysteine. Specifically methylates position 2 of adenine 2503 in 23S rRNA and position 2 of adenine 37 in tRNAs. m2A2503 modification seems to play a crucial role in the proofreading step occurring at the peptidyl transferase center and thus would serve to optimize ribosomal fidelity. The polypeptide is Dual-specificity RNA methyltransferase RlmN (Caulobacter vibrioides (strain ATCC 19089 / CIP 103742 / CB 15) (Caulobacter crescentus)).